The chain runs to 242 residues: Polycomb group RING finger protein 3 (242 aa).

An RING-type zinc finger spans residues 17 to 56 (CRLCSGYLIDATTVTECLHTFCRSCLVKYLEENNTCPTCR). Positions 115–149 (AKQHLDSHRNGETKADDSSNKEAAEEKPEEDNDYH) are disordered. Residues 117–140 (QHLDSHRNGETKADDSSNKEAAEE) show a composition bias toward basic and acidic residues. An interaction with BCORL1 region spans residues 132–242 (SSNKEAAEEK…LHYRPKMDLL (111 aa)).

In terms of assembly, component of a PRC1-like complex that contains PCGF3, RNF2 and RYBP. Interacts with CBX6, CBX7 and CBX8. Interacts with BCORL1.

Its subcellular location is the nucleus. The protein localises to the nucleoplasm. Its function is as follows. Component of a Polycomb group (PcG) multiprotein PRC1-like complex, a complex class required to maintain the transcriptionally repressive state of many genes, including Hox genes, throughout development. PcG PRC1 complex acts via chromatin remodeling and modification of histones; it mediates monoubiquitination of histone H2A 'Lys-119', rendering chromatin heritably changed in its expressibility. Within the PRC1-like complex, regulates RNF2 ubiquitin ligase activity. Plays a redundant role with PCGF5 as part of a PRC1-like complex that mediates monoubiquitination of histone H2A 'Lys-119' on the X chromosome and is required for normal silencing of one copy of the X chromosome in XX females. This Homo sapiens (Human) protein is Polycomb group RING finger protein 3 (PCGF3).